We begin with the raw amino-acid sequence, 460 residues long: Dihydroorotate dehydrogenase (quinone), mitochondrial (460 aa).

A mitochondrion-targeting transit peptide spans 1 to 32 (MAGRAATSSAKWAREFLFRRVSSNPLGATRNC). Residues 53–69 (ILTGATIGLAIAGGAYV) form a helical membrane-spanning segment. Residues 141 to 145 (AGFDK) and S165 each bind FMN. K145 provides a ligand contact to substrate. 190-194 (NRCGF) contacts substrate. Positions 213–245 (RMLAETSATSSSPSDDVKPGGKSGPGILGVNLG) are disordered. N243 and N274 together coordinate FMN. A substrate-binding site is contributed by 274-279 (NVSSPN). S277 serves as the catalytic Nucleophile. 2 residues coordinate FMN: K319 and S347. Residue 348-349 (NT) participates in substrate binding. FMN-binding positions include G371, G400, and 421–422 (YT).

Belongs to the dihydroorotate dehydrogenase family. Type 2 subfamily. The cofactor is FMN.

Its subcellular location is the mitochondrion inner membrane. The catalysed reaction is (S)-dihydroorotate + a quinone = orotate + a quinol. The protein operates within pyrimidine metabolism; UMP biosynthesis via de novo pathway; orotate from (S)-dihydroorotate (quinone route): step 1/1. Its function is as follows. Catalyzes the conversion of dihydroorotate to orotate with quinone as electron acceptor. In Arabidopsis thaliana (Mouse-ear cress), this protein is Dihydroorotate dehydrogenase (quinone), mitochondrial (PYRD).